The chain runs to 235 residues: Phosphoribosylaminoimidazole-succinocarboxamide synthase (235 aa).

It belongs to the SAICAR synthetase family.

It carries out the reaction 5-amino-1-(5-phospho-D-ribosyl)imidazole-4-carboxylate + L-aspartate + ATP = (2S)-2-[5-amino-1-(5-phospho-beta-D-ribosyl)imidazole-4-carboxamido]succinate + ADP + phosphate + 2 H(+). Its pathway is purine metabolism; IMP biosynthesis via de novo pathway; 5-amino-1-(5-phospho-D-ribosyl)imidazole-4-carboxamide from 5-amino-1-(5-phospho-D-ribosyl)imidazole-4-carboxylate: step 1/2. The chain is Phosphoribosylaminoimidazole-succinocarboxamide synthase from Streptococcus gordonii (strain Challis / ATCC 35105 / BCRC 15272 / CH1 / DL1 / V288).